A 464-amino-acid polypeptide reads, in one-letter code: PH domain-containing rcdII (464 aa).

Positions 8 to 210 form a coiled coil; that stretch reads KSSKEIIEDL…NTKLMSNLEI (203 aa). Disordered regions lie at residues 215–290 and 317–347; these read NFNN…NSSG and CNNN…SNSN. Composition is skewed to low complexity over residues 234–288, 317–328, and 338–347; these read STTT…SSNS, CNNNNNNNNGNS, and RSRSSSSNSN. Residues 353–461 form the PH domain; that stretch reads KIVKEGWLKR…WKDTISSLMP (109 aa).

The protein is PH domain-containing rcdII (rcdII) of Dictyostelium discoideum (Social amoeba).